An 89-amino-acid polypeptide reads, in one-letter code: Small ribosomal subunit protein eS25A (89 aa).

The protein belongs to the eukaryotic ribosomal protein eS25 family. Component of the small ribosomal subunit (SSU). Mature yeast ribosomes consist of a small (40S) and a large (60S) subunit. The 40S small subunit contains 1 molecule of ribosomal RNA (18S rRNA) and at least 33 different proteins. The large 60S subunit contains 3 rRNA molecules (25S, 5.8S and 5S rRNA) and at least 46 different proteins.

The protein resides in the cytoplasm. In terms of biological role, component of the ribosome, a large ribonucleoprotein complex responsible for the synthesis of proteins in the cell. The small ribosomal subunit (SSU) binds messenger RNAs (mRNAs) and translates the encoded message by selecting cognate aminoacyl-transfer RNA (tRNA) molecules. The large subunit (LSU) contains the ribosomal catalytic site termed the peptidyl transferase center (PTC), which catalyzes the formation of peptide bonds, thereby polymerizing the amino acids delivered by tRNAs into a polypeptide chain. The nascent polypeptides leave the ribosome through a tunnel in the LSU and interact with protein factors that function in enzymatic processing, targeting, and the membrane insertion of nascent chains at the exit of the ribosomal tunnel. The sequence is that of Small ribosomal subunit protein eS25A (rps2502) from Schizosaccharomyces pombe (strain 972 / ATCC 24843) (Fission yeast).